The following is a 266-amino-acid chain: Carboxy-S-adenosyl-L-methionine synthase (266 aa).

The segment at 1-24 (MPKRETQSLHDTQQQPGPTAPQRD) is disordered. S-adenosyl-L-methionine-binding positions include tyrosine 58, 83–85 (GCS), 108–109 (DN), 136–137 (DI), asparagine 151, and arginine 218.

The protein belongs to the class I-like SAM-binding methyltransferase superfamily. Cx-SAM synthase family. As to quaternary structure, homodimer.

It carries out the reaction prephenate + S-adenosyl-L-methionine = carboxy-S-adenosyl-L-methionine + 3-phenylpyruvate + H2O. Its function is as follows. Catalyzes the conversion of S-adenosyl-L-methionine (SAM) to carboxy-S-adenosyl-L-methionine (Cx-SAM). The chain is Carboxy-S-adenosyl-L-methionine synthase from Yersinia enterocolitica serotype O:8 / biotype 1B (strain NCTC 13174 / 8081).